The chain runs to 288 residues: Glycine--tRNA ligase alpha subunit (288 aa).

It belongs to the class-II aminoacyl-tRNA synthetase family. Tetramer of two alpha and two beta subunits.

The protein localises to the cytoplasm. It carries out the reaction tRNA(Gly) + glycine + ATP = glycyl-tRNA(Gly) + AMP + diphosphate. This is Glycine--tRNA ligase alpha subunit from Rickettsia canadensis (strain McKiel).